We begin with the raw amino-acid sequence, 542 residues long: Phosphoacetylglucosamine mutase (542 aa).

Methionine 1 is subject to N-acetylmethionine. Residue threonine 62 is modified to Phosphothreonine. The active-site Phosphoserine intermediate is serine 64. Mg(2+)-binding residues include serine 64, aspartate 276, aspartate 278, and aspartate 280. A Phosphoserine modification is found at serine 64. Residues 370 to 372, 496 to 500, and arginine 505 contribute to the substrate site; these read EAN and RPSGT.

The protein belongs to the phosphohexose mutase family. Mg(2+) serves as cofactor.

The catalysed reaction is N-acetyl-alpha-D-glucosamine 1-phosphate = N-acetyl-D-glucosamine 6-phosphate. It participates in nucleotide-sugar biosynthesis; UDP-N-acetyl-alpha-D-glucosamine biosynthesis; N-acetyl-alpha-D-glucosamine 1-phosphate from alpha-D-glucosamine 6-phosphate (route I): step 2/2. Inhibited by Mn(2+), Cd(2+), Zn(2+), Cu(2+) and Be(2+). In terms of biological role, catalyzes the conversion of GlcNAc-6-P into GlcNAc-1-P during the synthesis of uridine diphosphate/UDP-GlcNAc, a sugar nucleotide critical to multiple glycosylation pathways including protein N- and O-glycosylation. The polypeptide is Phosphoacetylglucosamine mutase (Sus scrofa (Pig)).